Here is a 59-residue protein sequence, read N- to C-terminus: Large ribosomal subunit protein uL30 (59 aa).

The protein belongs to the universal ribosomal protein uL30 family. Part of the 50S ribosomal subunit.

The protein is Large ribosomal subunit protein uL30 of Stutzerimonas stutzeri (strain A1501) (Pseudomonas stutzeri).